The sequence spans 651 residues: Maternal embryonic leucine zipper kinase (651 aa).

Residues 11 to 263 (YELHETIGTG…MKNLLNHPWI (253 aa)) enclose the Protein kinase domain. ATP is bound by residues 17-25 (IGTGGFAKV) and lysine 40. The residue at position 56 (threonine 56) is a Phosphothreonine; by autocatalysis. Aspartate 132 acts as the Proton acceptor in catalysis. Tyrosine 163 carries the post-translational modification Phosphotyrosine; by autocatalysis. Residue threonine 167 is modified to Phosphothreonine; by autocatalysis. Serine 171 and serine 253 each carry phosphoserine; by autocatalysis. Positions 282–321 (LDDDCVTELSVHHRNNRQTMEDLISLWQYDHLTATYLLLL) are UBA-like. The tract at residues 326-651 (RGKPVRLRLS…VEDILSSCKV (326 aa)) is autoinhibitory region. Phosphoserine; by autocatalysis is present on residues serine 336, serine 343, and serine 356. Tyrosine 367 bears the Phosphotyrosine mark. A Phosphoserine; by autocatalysis modification is found at serine 391. Residue threonine 398 is modified to Phosphothreonine; by autocatalysis. Position 407 is a phosphoserine; by autocatalysis (serine 407). Residue threonine 409 is modified to Phosphothreonine. Serine 431 is subject to Phosphoserine; by autocatalysis. Position 478 is a phosphothreonine (threonine 478). The residue at position 494 (threonine 494) is a Phosphothreonine; by autocatalysis. Serine 498 carries the phosphoserine modification. Serine 505 carries the post-translational modification Phosphoserine; by autocatalysis. Threonine 518 bears the Phosphothreonine mark. Position 529 is a phosphoserine; by autocatalysis (serine 529). Position 529 is a phosphoserine (serine 529). Residue threonine 539 is modified to Phosphothreonine; by autocatalysis. The KA1 domain occupies 602–651 (SDFGKVTMQFELEVCQLQKPDVVGIRRQRLKGDAWVYKRLVEDILSSCKV).

Belongs to the protein kinase superfamily. CAMK Ser/Thr protein kinase family. SNF1 subfamily. As to quaternary structure, monomer. Interacts with ZNF622 and PPP1R8. Post-translationally, autophosphorylated: autophosphorylation of the T-loop at Thr-167 and Ser-171 is required for activation. Thr-478 phosphorylation during mitosis promotes interaction with PPP1R8. Expressed in placenta, kidney, thymus, testis, ovary and intestine.

The protein localises to the cell membrane. The enzyme catalyses L-tyrosyl-[protein] + ATP = O-phospho-L-tyrosyl-[protein] + ADP + H(+). It carries out the reaction L-seryl-[protein] + ATP = O-phospho-L-seryl-[protein] + ADP + H(+). The catalysed reaction is L-threonyl-[protein] + ATP = O-phospho-L-threonyl-[protein] + ADP + H(+). Its activity is regulated as follows. Activated by autophosphorylation of the T-loop at Thr-167 and Ser-171: in contrast to other members of the SNF1 subfamily, phosphorylation at Thr-167 is not mediated by STK11/LKB1 but via autophosphorylation instead. Inhibited by calcium-binding. Kinase activity is also regulated by reducing agents: dithiothreitol (DTT) or reduced glutathione are required for kinase activity in vitro; such dependence is however not due to the presence of disulfide bonds. Functionally, serine/threonine-protein kinase involved in various processes such as cell cycle regulation, self-renewal of stem cells, apoptosis and splicing regulation. Has a broad substrate specificity; phosphorylates BCL2L14, CDC25B, MAP3K5/ASK1 and ZNF622. Acts as an activator of apoptosis by phosphorylating and activating MAP3K5/ASK1. Acts as a regulator of cell cycle, notably by mediating phosphorylation of CDC25B, promoting localization of CDC25B to the centrosome and the spindle poles during mitosis. Plays a key role in cell proliferation and carcinogenesis. Required for proliferation of embryonic and postnatal multipotent neural progenitors. Phosphorylates and inhibits BCL2L14, possibly leading to affect mammary carcinogenesis by mediating inhibition of the pro-apoptotic function of BCL2L14. Also involved in the inhibition of spliceosome assembly during mitosis by phosphorylating ZNF622, thereby contributing to its redirection to the nucleus. May also play a role in primitive hematopoiesis. This is Maternal embryonic leucine zipper kinase (MELK) from Homo sapiens (Human).